We begin with the raw amino-acid sequence, 362 residues long: Putative G-protein coupled receptor B0244.5 (362 aa).

Over 1–47 (MQNIFENCSYHSKYEPYFLNCTNTTNQCVLIQDVGIIQAIDFWANLC) the chain is Extracellular. Residues N7, N20, and N23 are each glycosylated (N-linked (GlcNAc...) asparagine). A helical transmembrane segment spans residues 48–68 (IPFTLFVIAFILNGYYLSILI). At 69–81 (PEFRKMNDTTKKQ) the chain is on the cytoplasmic side. A helical transmembrane segment spans residues 82–102 (YIFVVSRGISSLSASSIMMVL). Over 103–125 (RLLKMLSTSFTVYFLFFLIDDLS) the chain is Extracellular. The helical transmembrane segment at 126 to 145 (FYSLLGSYVGSTLLLYLATV) threads the bilayer. Residues 146–161 (RPIFYSIQISVRIVYK) are Cytoplasmic-facing. The helical transmembrane segment at 162–182 (FALVNVLLAVVLAVTTAIFQA) threads the bilayer. Topologically, residues 183–204 (AEVSDGFFHCDVQHCQPIINIA) are extracellular. Residues 205-225 (MFVIIATSFLIPIITLTFVLV) traverse the membrane as a helical segment. The Cytoplasmic portion of the chain corresponds to 226 to 255 (TLCFQKSRTQSIGNFTVDNSVYKSARTRLA). A helical membrane pass occupies residues 256 to 276 (WTLFTFTLISLTEMIPSSFLV). Residues 277 to 295 (NLRVEDTITICVNFYQADH) are Extracellular-facing. Residues 296–316 (LFIPAIMNSFQTLAWGIALIV) form a helical membrane-spanning segment. Topologically, residues 317–362 (DPLCALLFDPRIRKVWVEHVSRLSIIIGRSFEACCHSNLNKEIQDK) are cytoplasmic.

Belongs to the G-protein coupled receptor 1 family. B0244 subfamily.

The protein localises to the cell membrane. This chain is Putative G-protein coupled receptor B0244.5, found in Caenorhabditis elegans.